Reading from the N-terminus, the 907-residue chain is Translation initiation factor IF-2 (907 aa).

The interval 26-317 (DAGMKKSSSD…KPKSMQHGFD (292 aa)) is disordered. Basic and acidic residues-rich tracts occupy residues 28-44 (GMKK…EKQK) and 101-248 (SAIE…DTDY). Residues 299-308 (KGGRKGKLSK) are compositionally biased toward basic residues. Residues 406-575 (PRAPVVTIMG…LLQAEVLELT (170 aa)) enclose the tr-type G domain. Positions 415 to 422 (GHVDHGKT) are G1. A GTP-binding site is contributed by 415–422 (GHVDHGKT). Positions 440–444 (GITQH) are G2. The G3 stretch occupies residues 461 to 464 (DTPG). Residues 461-465 (DTPGH) and 515-518 (NKID) each bind GTP. The segment at 515 to 518 (NKID) is G4. Residues 551 to 553 (SAK) are G5.

The protein belongs to the TRAFAC class translation factor GTPase superfamily. Classic translation factor GTPase family. IF-2 subfamily.

Its subcellular location is the cytoplasm. One of the essential components for the initiation of protein synthesis. Protects formylmethionyl-tRNA from spontaneous hydrolysis and promotes its binding to the 30S ribosomal subunits. Also involved in the hydrolysis of GTP during the formation of the 70S ribosomal complex. This is Translation initiation factor IF-2 from Vibrio vulnificus (strain CMCP6).